Here is a 725-residue protein sequence, read N- to C-terminus: Peroxisomal fatty acid beta-oxidation multifunctional protein MFP2 (725 aa).

The Nucleophile role is filled by Glu-119. Glu-139 acts as the Proton acceptor in catalysis. Positions 723-725 match the Microbody targeting signal motif; it reads SRL.

The protein in the N-terminal section; belongs to the enoyl-CoA hydratase/isomerase family. This sequence in the central section; belongs to the 3-hydroxyacyl-CoA dehydrogenase family. Highly expressed in senescing leaves and at lower levels in flowers and siliques.

The protein localises to the glyoxysome. Its subcellular location is the peroxisome. It carries out the reaction a (3S)-3-hydroxyacyl-CoA = a (2E)-enoyl-CoA + H2O. The enzyme catalyses a 4-saturated-(3S)-3-hydroxyacyl-CoA = a (3E)-enoyl-CoA + H2O. The catalysed reaction is (3S)-3-hydroxybutanoyl-CoA = (2E)-butenoyl-CoA + H2O. It catalyses the reaction (3S)-hydroxyoctanoyl-CoA = (2E)-octenoyl-CoA + H2O. It carries out the reaction (3S)-3-hydroxydodecanoyl-CoA = (2E)-dodecenoyl-CoA + H2O. The enzyme catalyses (3S)-hydroxytetradecanoyl-CoA = (2E)-tetradecenoyl-CoA + H2O. The catalysed reaction is (3S)-hydroxyhexanoyl-CoA = (2E)-hexenoyl-CoA + H2O. It catalyses the reaction a (3Z)-enoyl-CoA = a 4-saturated (2E)-enoyl-CoA. It carries out the reaction a (3E)-enoyl-CoA = a 4-saturated (2E)-enoyl-CoA. The enzyme catalyses (3S)-3-hydroxybutanoyl-CoA = (3R)-3-hydroxybutanoyl-CoA. The catalysed reaction is a (3S)-3-hydroxyacyl-CoA + NAD(+) = a 3-oxoacyl-CoA + NADH + H(+). It catalyses the reaction (3S)-3-hydroxybutanoyl-CoA + NAD(+) = acetoacetyl-CoA + NADH + H(+). It carries out the reaction (3S)-hydroxyhexanoyl-CoA + NAD(+) = 3-oxohexanoyl-CoA + NADH + H(+). The enzyme catalyses (3S)-hydroxyoctanoyl-CoA + NAD(+) = 3-oxooctanoyl-CoA + NADH + H(+). The catalysed reaction is (3S)-3-hydroxydodecanoyl-CoA + NAD(+) = 3-oxododecanoyl-CoA + NADH + H(+). It catalyses the reaction (3S)-hydroxytetradecanoyl-CoA + NAD(+) = 3-oxotetradecanoyl-CoA + NADH + H(+). The protein operates within lipid metabolism; fatty acid beta-oxidation. Involved in peroxisomal fatty acid beta-oxidation during seed germination. Possesses enoyl-CoA hydratase activity against long chain substrates (C14-C18) and 3-hydroxyacyl-CoA dehydrogenase activity against chains of variable sizes (C6-C18). Possesses 3-hydroxy-3-phenylpropionyl-CoA dehydrogenase activity and is involved in the peroxisomal beta-oxidation pathway for the biosynthesis of benzoic acid (BA). Required for the accumulation in seeds of substituted hydroxybenzoylated choline esters, which are BA-containing secondary metabolites. Fatty acid beta-oxidation pathway in peroxisomes regulates gene silencing, histone acetylation and DNA methylation. This chain is Peroxisomal fatty acid beta-oxidation multifunctional protein MFP2, found in Arabidopsis thaliana (Mouse-ear cress).